Consider the following 378-residue polypeptide: Probable selenide, water dikinase (378 aa).

Cys-33 is a catalytic residue. Residues Lys-36, 63–65 (GLD), Asp-83, Asp-106, and 158–160 (GQT) contribute to the ATP site. Mg(2+) is bound at residue Asp-65. Asp-106 lines the Mg(2+) pocket. Residue Asp-260 participates in Mg(2+) binding.

This sequence belongs to the selenophosphate synthase 1 family. Class I subfamily. Homodimer. It depends on Mg(2+) as a cofactor.

It carries out the reaction hydrogenselenide + ATP + H2O = selenophosphate + AMP + phosphate + 2 H(+). In terms of biological role, synthesizes selenophosphate from selenide and ATP. The protein is Probable selenide, water dikinase (seld-1) of Caenorhabditis elegans.